Consider the following 1136-residue polypeptide: Carbamoyl phosphate synthase large chain (1136 aa).

The segment at 1-402 is carboxyphosphate synthetic domain; it reads MPKRTDIKSV…SLGKAMRSID (402 aa). Positions 129, 169, 175, 176, 208, 210, 215, 241, 242, 243, 285, and 299 each coordinate ATP. An ATP-grasp 1 domain is found at 133 to 328; it reads KKVVKEAGAE…IAKIATKLAL (196 aa). Mg(2+)-binding residues include Gln-285, Glu-299, and Asn-301. 3 residues coordinate Mn(2+): Gln-285, Glu-299, and Asn-301. The interval 403-551 is oligomerization domain; that stretch reads KRHMGFSWDG…YYYSCYADET (149 aa). Residues 552–962 form a carbamoyl phosphate synthetic domain region; that stretch reads ELRKREREAV…AFAKSQLASY (411 aa). Residues 681 to 881 form the ATP-grasp 2 domain; that stretch reads GEVLRQEHLN…LAKAAARIMA (201 aa). Residues Arg-717, Lys-765, Leu-767, Glu-772, Gly-797, Val-798, His-799, Ser-800, Gln-840, and Glu-852 each coordinate ATP. Mg(2+)-binding residues include Gln-840, Glu-852, and Asn-854. The Mn(2+) site is built by Gln-840, Glu-852, and Asn-854. The allosteric domain stretch occupies residues 963 to 1136; the sequence is EGGLPTNGNV…KEEGEEARAQ (174 aa). Residues 964–1122 form the MGS-like domain; the sequence is GGLPTNGNVF…QEHSRELYEL (159 aa).

The protein belongs to the CarB family. As to quaternary structure, composed of two chains; the small (or glutamine) chain promotes the hydrolysis of glutamine to ammonia, which is used by the large (or ammonia) chain to synthesize carbamoyl phosphate. Tetramer of heterodimers (alpha,beta)4. The cofactor is Mg(2+). Requires Mn(2+) as cofactor.

The enzyme catalyses hydrogencarbonate + L-glutamine + 2 ATP + H2O = carbamoyl phosphate + L-glutamate + 2 ADP + phosphate + 2 H(+). The catalysed reaction is hydrogencarbonate + NH4(+) + 2 ATP = carbamoyl phosphate + 2 ADP + phosphate + 2 H(+). Its pathway is amino-acid biosynthesis; L-arginine biosynthesis; carbamoyl phosphate from bicarbonate: step 1/1. The protein operates within pyrimidine metabolism; UMP biosynthesis via de novo pathway; (S)-dihydroorotate from bicarbonate: step 1/3. Functionally, large subunit of the glutamine-dependent carbamoyl phosphate synthetase (CPSase). CPSase catalyzes the formation of carbamoyl phosphate from the ammonia moiety of glutamine, carbonate, and phosphate donated by ATP, constituting the first step of 2 biosynthetic pathways, one leading to arginine and/or urea and the other to pyrimidine nucleotides. The large subunit (synthetase) binds the substrates ammonia (free or transferred from glutamine from the small subunit), hydrogencarbonate and ATP and carries out an ATP-coupled ligase reaction, activating hydrogencarbonate by forming carboxy phosphate which reacts with ammonia to form carbamoyl phosphate. The chain is Carbamoyl phosphate synthase large chain from Bifidobacterium animalis subsp. lactis (strain AD011).